The primary structure comprises 78 residues: RNA-binding protein Hfq (78 aa).

Residues 10-69 (DPFLNTLRKEHVPVSIYLVNGIKLQGQIESFDQYVVLLRNTVTQMVYKHAISTVVPARAV) form the Sm domain.

It belongs to the Hfq family. As to quaternary structure, homohexamer.

RNA chaperone that binds small regulatory RNA (sRNAs) and mRNAs to facilitate mRNA translational regulation in response to envelope stress, environmental stress and changes in metabolite concentrations. Also binds with high specificity to tRNAs. The sequence is that of RNA-binding protein Hfq from Bordetella avium (strain 197N).